Here is a 311-residue protein sequence, read N- to C-terminus: Ornithine carbamoyltransferase (311 aa).

Residues 54-58, N81, R104, and 131-134 each bind carbamoyl phosphate; these read STRTR and HPCQ. L-ornithine-binding positions include N164, D225, and 229–230; that span reads DM. Carbamoyl phosphate contacts are provided by residues 268–271, T279, and R297; that span reads HDMP.

This sequence belongs to the aspartate/ornithine carbamoyltransferase superfamily. OTCase family.

Its subcellular location is the cytoplasm. The enzyme catalyses carbamoyl phosphate + L-ornithine = L-citrulline + phosphate + H(+). Its pathway is amino-acid biosynthesis; L-arginine biosynthesis; L-arginine from L-ornithine and carbamoyl phosphate: step 1/3. Reversibly catalyzes the transfer of the carbamoyl group from carbamoyl phosphate (CP) to the N(epsilon) atom of ornithine (ORN) to produce L-citrulline. The protein is Ornithine carbamoyltransferase (argF) of Leptospira interrogans serogroup Icterohaemorrhagiae serovar copenhageni (strain Fiocruz L1-130).